The chain runs to 355 residues: IGF-like family receptor 1 (355 aa).

The signal sequence occupies residues 1–22 (MGPGRCLLTALLLLALAPPPEA). The Extracellular portion of the chain corresponds to 23 to 163 (SQYCGRLEYW…PQQAWPNFLP (141 aa)). Positions 120–147 (KGHCPLTPGNPGAPSSQERSSPASSIAW) are disordered. Residues 132–144 (APSSQERSSPASS) show a composition bias toward low complexity. Residues 164–184 (LVVLVLLLTLAVIAILLFILL) form a helical membrane-spanning segment. Topologically, residues 185–355 (WHLCWPKEKA…KLGSSGVCWA (171 aa)) are cytoplasmic.

It localises to the cell membrane. In terms of biological role, probable cell membrane receptor for the IGF-like family proteins. Binds IGFL1 and IGFL3 with a higher affinity. May also bind IGFL2. The polypeptide is IGF-like family receptor 1 (IGFLR1) (Homo sapiens (Human)).